The sequence spans 196 residues: Ribonuclease S-F11 (196 aa).

A disulfide bond links C16 and C21. Residue N28 is glycosylated (N-linked (GlcNAc...) asparagine). Catalysis depends on H32, which acts as the Proton donor. RNA is bound by residues H32 and 69–70 (QL). Intrachain disulfides connect C46–C94, C153–C186, and C169–C180. Q87 is a catalytic residue. 90–91 (KH) lines the RNA pocket. H91 serves as the catalytic Proton acceptor.

This sequence belongs to the RNase T2 family. In terms of assembly, monomer.

It is found in the secreted. It localises to the extracellular space. It catalyses the reaction a ribonucleotidyl-ribonucleotide-RNA + H2O = a 3'-end 3'-phospho-ribonucleotide-RNA + a 5'-end dephospho-ribonucleoside-RNA + H(+). Self-incompatibility (SI) is the inherited ability of a flowering plant to prevent self-fertilization by discriminating between self and non-self pollen during pollination. In many species of the Solanaceae, self-incompatibility is controlled by the single, multiallelic locus S. In Nicotiana alata (Winged tobacco), this protein is Ribonuclease S-F11.